Reading from the N-terminus, the 213-residue chain is Ribonuclease HII (213 aa).

An RNase H type-2 domain is found at 1–213 (MKIIGIDEAG…SWKTAQKFIQ (213 aa)). Residues Asp-7, Glu-8, and Asp-105 each coordinate a divalent metal cation.

It belongs to the RNase HII family. Mn(2+) is required as a cofactor. It depends on Mg(2+) as a cofactor.

The protein resides in the cytoplasm. It catalyses the reaction Endonucleolytic cleavage to 5'-phosphomonoester.. Its function is as follows. Endonuclease that specifically degrades the RNA of RNA-DNA hybrids. The polypeptide is Ribonuclease HII (Methanococcoides burtonii (strain DSM 6242 / NBRC 107633 / OCM 468 / ACE-M)).